The following is a 382-amino-acid chain: Lipid-A-disaccharide synthase (382 aa).

Belongs to the LpxB family.

It catalyses the reaction 2-N,3-O-bis[(3R)-3-hydroxytetradecanoyl]-alpha-D-glucosaminyl 1-phosphate + UDP-2-N,3-O-bis[(3R)-3-hydroxytetradecanoyl]-alpha-D-glucosamine = lipid A disaccharide (E. coli) + UDP + H(+). The catalysed reaction is a lipid X + a UDP-2-N,3-O-bis[(3R)-3-hydroxyacyl]-alpha-D-glucosamine = a lipid A disaccharide + UDP + H(+). Its pathway is glycolipid biosynthesis; lipid IV(A) biosynthesis; lipid IV(A) from (3R)-3-hydroxytetradecanoyl-[acyl-carrier-protein] and UDP-N-acetyl-alpha-D-glucosamine: step 5/6. Condensation of UDP-2,3-diacylglucosamine and 2,3-diacylglucosamine-1-phosphate to form lipid A disaccharide, a precursor of lipid A, a phosphorylated glycolipid that anchors the lipopolysaccharide to the outer membrane of the cell. This is Lipid-A-disaccharide synthase from Sodalis glossinidius (strain morsitans).